The following is a 147-amino-acid chain: Bis(5'-nucleosyl)-tetraphosphatase [asymmetrical] (147 aa).

A2 is subject to N-acetylalanine. One can recognise a Nudix hydrolase domain in the interval 2–139; it reads ALRACGLIIF…EMKAALQEGH (138 aa). A Nudix box motif is present at residues 43-64; sequence GHVEPGESDLETALRETQEEAG.

Belongs to the Nudix hydrolase family. The cofactor is a divalent metal cation.

It carries out the reaction P(1),P(4)-bis(5'-guanosyl) tetraphosphate + H2O = GMP + GTP + 2 H(+). The enzyme catalyses a 5'-end CoA-ribonucleoside in mRNA + H2O = a 5'-end phospho-adenosine-phospho-ribonucleoside in mRNA + (R)-4'-phosphopantetheine + 2 H(+). It catalyses the reaction a 5'-end FAD-phospho-ribonucleoside in mRNA + H2O = a 5'-end phospho-adenosine-phospho-ribonucleoside in mRNA + FMN + 2 H(+). In terms of biological role, catalyzes the asymmetric hydrolysis of diadenosine 5',5'''-P1,P4-tetraphosphate (Ap4A) to yield AMP and ATP. Exhibits decapping activity towards FAD-capped RNAs and dpCoA-capped RNAs in vitro. The protein is Bis(5'-nucleosyl)-tetraphosphatase [asymmetrical] (NUDT2) of Bos taurus (Bovine).